The primary structure comprises 1199 residues: Tubulin monoglutamylase TTLL4 (1199 aa).

The segment covering 1-25 (MASAGTQHYSIGLRQKNSFKQSGPS) has biased composition (polar residues). Disordered regions lie at residues 1–43 (MASA…RVWP), 472–517 (IQLG…ELVD), and 525–544 (RDEN…SAVS). Positions 477 to 495 (SEKERPEEARELDSSDRDI) are enriched in basic and acidic residues. The span at 506–517 (AETEDTEEELVD) shows a compositional bias: acidic residues. Residues 604–947 (RKLLRWKMST…VLPNAEDIIS (344 aa)) form the TTL domain. Serine 691 carries the phosphoserine modification. Residues lysine 721, 727 to 728 (RG), 749 to 752 (QRYL), and 762 to 764 (KFD) contribute to the ATP site. Arginine 727 contacts a protein. Arginine 788 provides a ligand contact to L-glutamate. Position 809 to 810 (809 to 810 (TN)) interacts with ATP. L-glutamate-binding residues include tyrosine 811, serine 812, and lysine 833. Positions 893, 906, and 908 each coordinate Mg(2+). The interval 918–1029 (PLDISIKGQM…RGQFERIFPS (112 aa)) is c-MTBD region. Lysine 924 contributes to the L-glutamate binding site. The segment covering 1130 to 1141 (GTTPKSKKTQAG) has biased composition (polar residues). Positions 1130–1199 (GTTPKSKKTQ…ISDSLLAVSP (70 aa)) are disordered. A compositionally biased stretch (basic and acidic residues) spans 1151 to 1160 (SSKDSEDTSK). Residues 1164–1192 (LSTQTLPVIKCSGQTSRLSASSTFQSISD) are compositionally biased toward polar residues.

Belongs to the tubulin--tyrosine ligase family. The cofactor is Mg(2+).

The protein localises to the cytoplasm. It localises to the cell projection. The protein resides in the cilium. Its subcellular location is the cytoskeleton. It is found in the cilium basal body. It carries out the reaction L-glutamyl-[protein] + L-glutamate + ATP = gamma-L-glutamyl-L-glutamyl-[protein] + ADP + phosphate + H(+). In terms of biological role, monoglutamylase which modifies both tubulin and non-tubulin proteins, adding a single glutamate on the gamma-carboxyl group of specific glutamate residues of target proteins. Involved in the side-chain initiation step of the polyglutamylation reaction but not in the elongation step. Preferentially modifies beta-tail tubulin over the alpha-tubulin. Monoglutamylates nucleosome assembly proteins NAP1L1 and NAP1L4. Monoglutamylates nucleotidyltransferase CGAS, leading to inhibition of CGAS catalytic activity, thereby preventing antiviral defense function. Involved in KLF4 glutamylation which impedes its ubiquitination, thereby leading to somatic cell reprogramming, pluripotency maintenance and embryogenesis. The chain is Tubulin monoglutamylase TTLL4 from Homo sapiens (Human).